We begin with the raw amino-acid sequence, 192 residues long: Soluble inorganic pyrophosphatase 2 (192 aa).

Residues Lys38, Arg52, and Tyr64 each contribute to the substrate site. Mg(2+)-binding residues include Asp74, Asp79, and Asp111. Tyr148 contacts substrate.

In terms of assembly, monomer. The cofactor is Mg(2+). In terms of processing, the N-terminus is blocked.

The protein resides in the mitochondrion. It catalyses the reaction diphosphate + H2O = 2 phosphate + H(+). The protein is Soluble inorganic pyrophosphatase 2 (ppa2) of Chlamydomonas reinhardtii (Chlamydomonas smithii).